The sequence spans 349 residues: Phosphoribosylformylglycinamidine cyclo-ligase (349 aa).

Belongs to the AIR synthase family.

It localises to the cytoplasm. It carries out the reaction 2-formamido-N(1)-(5-O-phospho-beta-D-ribosyl)acetamidine + ATP = 5-amino-1-(5-phospho-beta-D-ribosyl)imidazole + ADP + phosphate + H(+). It functions in the pathway purine metabolism; IMP biosynthesis via de novo pathway; 5-amino-1-(5-phospho-D-ribosyl)imidazole from N(2)-formyl-N(1)-(5-phospho-D-ribosyl)glycinamide: step 2/2. The chain is Phosphoribosylformylglycinamidine cyclo-ligase from Methanococcus maripaludis (strain C5 / ATCC BAA-1333).